We begin with the raw amino-acid sequence, 346 residues long: Alkylated DNA repair protein ALKBH8 homolog (346 aa).

Residues 1–21 form a disordered region; that stretch reads MVQPRFVRPTQSSPSSISGEP. The segment covering 12 to 21 has biased composition (low complexity); it reads SSPSSISGEP. One can recognise an RRM domain in the interval 24 to 102; it reads SNLYVANCGP…RSLHIRYSVL (79 aa). One can recognise a Fe2OG dioxygenase domain in the interval 208–328; the sequence is NLDQLTVNEY…RVSFTLRKVR (121 aa). Fe cation-binding residues include histidine 226, aspartate 228, and histidine 298. Residues arginine 319 and arginine 325 each coordinate 2-oxoglutarate.

This sequence belongs to the alkB family. The cofactor is Fe(2+).

In terms of biological role, binds tRNA and catalyzes the iron and alpha-ketoglutarate dependent hydroxylation of 5-methylcarboxymethyl uridine at the wobble position of the anticodon loop in tRNA via its dioxygenase domain, giving rise to 5-(S)-methoxycarbonylhydroxymethyluridine. The sequence is that of Alkylated DNA repair protein ALKBH8 homolog from Arabidopsis thaliana (Mouse-ear cress).